A 263-amino-acid chain; its full sequence is uncharacterized protein (263 aa).

Residues 22–44 are disordered; it reads IDGSDDQSDRTRSSSGDSTSNSL. A compositionally biased stretch (low complexity) spans 34–43; it reads SSSGDSTSNS.

Its subcellular location is the mitochondrion. This is an uncharacterized protein from Schizosaccharomyces pombe (strain 972 / ATCC 24843) (Fission yeast).